A 439-amino-acid chain; its full sequence is MIRGSSALKSLTSRRLYSTGVKYTTLSNGVTVATETNPAAKTSSVGLFFGAGSRSEHSHSNGISALTTNVLASQSAKGSLLTAKNDREFNGIIAQTTNDNITEAGKLIASIASNAVDIVEKTDLTKHKQYLSAQASAVEADPKSKVLSHLYSSAFQGYSLALPTLGTTESVENLENQDSLRHLAKHLVNNNTVIAASGNFDHDKLADAIEANLKIAEGVKPEIKPASFLGSEVRMRDDTLPKAYISIAVHGEGLNSPNYYLAKVAAAIYGDFYLHSTIAKFTSPKLASIVQEYNIVESYNHYSKSFSDTGIWGYYAEIADKFTVDDFTHFSLKEWNRLSISISEAEVARAKAQVKTALAKELANSFAVTSDIAEKVLLVGHRQSLREAFEKIDAIKVNDVKEWGKSKVWDRDIVISGTGLIEDLLDYNRNRNEMAMMRW.

A mitochondrion-targeting transit peptide spans 1–17 (MIRGSSALKSLTSRRLY).

This sequence belongs to the peptidase M16 family. UQCRC1/QCR1 subfamily. In terms of assembly, component of the ubiquinol-cytochrome c oxidoreductase (cytochrome b-c1 complex, complex III, CIII), a multisubunit enzyme composed of 10 subunits. The complex is composed of 3 respiratory subunits cytochrome b (COB), cytochrome c1 (CYT1) and Rieske protein (RIP1), 2 core protein subunits COR1 and QCR2, and 5 low-molecular weight protein subunits QCR6, QCR7, QCR8, QCR9 and QCR10. The complex exists as an obligatory dimer and forms supercomplexes (SCs) in the inner mitochondrial membrane with a monomer or a dimer of cytochrome c oxidase (complex IV, CIV), resulting in 2 different assemblies (supercomplexes III(2)IV and III(2)IV(2)).

It is found in the mitochondrion inner membrane. Functionally, component of the ubiquinol-cytochrome c oxidoreductase, a multisubunit transmembrane complex that is part of the mitochondrial electron transport chain which drives oxidative phosphorylation. The complex plays an important role in the uptake of multiple carbon sources present in different host niches. This Candida albicans (strain SC5314 / ATCC MYA-2876) (Yeast) protein is Cytochrome b-c1 complex reductase subunit, mitochondrial.